A 397-amino-acid chain; its full sequence is Lysophospholipid transporter LplT (397 aa).

The Periplasmic portion of the chain corresponds to 1-17 (MSESVHTNTSLWSKGMK). Residues 18 to 38 (AVIVAQFLSAFGDNALLFATL) traverse the membrane as a helical segment. Over 39–52 (ALLKAQFYPEWSQP) the chain is Cytoplasmic. Residues 53 to 73 (ILQMVFVGAYILFAPFVGQVA) traverse the membrane as a helical segment. The Periplasmic segment spans residues 74–90 (DSFAKGRVMMFANGLKL). The helical transmembrane segment at 91 to 111 (LGAASICFGINPFLGYTLVGV) threads the bilayer. At 112–144 (GAAAYSPAKYGILGELTTGSKLVKANGLMEAST) the chain is on the cytoplasmic side. Residues 145–165 (IAAILLGSVAGGVLADWHVLV) form a helical membrane-spanning segment. Residue Ala-166 is a topological domain, periplasmic. The chain crosses the membrane as a helical span at residues 167–187 (LAACALAYGGAVVANIYIPKL). Over 188–226 (AAARPGQSWNLINMTRSFLNACTSLWRNGETRFSLVGTS) the chain is Cytoplasmic. The helical transmembrane segment at 227 to 247 (LFWGAGVTLRFLLVLWVPVAL) threads the bilayer. At 248-256 (GITDNATPT) the chain is on the periplasmic side. Residues 257–277 (YLNAMVAIGIVVGAGAAAKLV) form a helical membrane-spanning segment. Topologically, residues 278–280 (TLE) are cytoplasmic. The helical transmembrane segment at 281–301 (TVSRCMPAGILIGVVVLIFSL) threads the bilayer. The Periplasmic portion of the chain corresponds to 302 to 304 (QHE). Residues 305-325 (LLPAYALLMLIGVLGGFFVVP) traverse the membrane as a helical segment. At 326 to 343 (LNALLQERGKKSVGAGNA) the chain is on the cytoplasmic side. A helical membrane pass occupies residues 344–364 (IAVQNLGENSAMLLMLGIYSL). Over 365–366 (AV) the chain is Periplasmic. The helical transmembrane segment at 367–387 (MVGIPVVPIGIGFGALFALAI) threads the bilayer. At 388–397 (TALWIWQRRY) the chain is on the cytoplasmic side.

Belongs to the major facilitator superfamily. LplT (TC 2.A.1.42) family.

It is found in the cell inner membrane. In terms of biological role, catalyzes the facilitated diffusion of 2-acyl-glycero-3-phosphoethanolamine (2-acyl-GPE) into the cell. This chain is Lysophospholipid transporter LplT, found in Escherichia coli O127:H6 (strain E2348/69 / EPEC).